The chain runs to 607 residues: DNA polymerase (607 aa).

The 3'-5' exonuclease domain occupies methionine 1 to aspartate 213. Residues valine 214–tyrosine 607 form a polymerase region.

It belongs to the DNA polymerase type-A family.

It catalyses the reaction DNA(n) + a 2'-deoxyribonucleoside 5'-triphosphate = DNA(n+1) + diphosphate. Replicates viral genomic DNA. This polymerase possesses two enzymatic activities: DNA synthesis (polymerase) and an exonucleolytic activity that degrades single-stranded DNA in the 3'-5' direction. The chain is DNA polymerase (44) from Mycobacterium phage D29 (Mycobacteriophage D29).